Here is an 888-residue protein sequence, read N- to C-terminus: ETO1-like protein 1 (888 aa).

Positions 180-280 constitute a BTB domain; the sequence is KNVVFKIGEE…ACDRELASLI (101 aa). TPR repeat units follow at residues 381 to 414, 441 to 477, 511 to 544, 637 to 670, and 711 to 744; these read VLGF…GHVY, SSVS…DPTL, LECL…CPDY, HERL…KRSF, and GQAL…RHTR. Positions 755–793 form a coiled coil; sequence LRNDKAAAYEEMTRLIEKAQNNASAYEKRSEYCDRELAK. 2 TPR repeats span residues 807–840 and 842–873; these read VYPY…KADL and LLHL…DPNH.

The protein belongs to the ETO1 family. Interacts with the C-terminal domain of ACS4, ACS5 and ACS9. In terms of tissue distribution, predominantly expressed in flowers.

It participates in protein modification; protein ubiquitination. Possible regulator of the ethylene pathway, which acts by regulating the stability of 1-aminocyclopropane-1-carboxylate synthase (ACS) enzymes. May act as a substrate-specific adapter that connects ACS enzymes, such as ACS5, to ubiquitin ligase complexes, leading to proteasomal degradation of ACS enzymes. In Arabidopsis thaliana (Mouse-ear cress), this protein is ETO1-like protein 1 (EOL1).